We begin with the raw amino-acid sequence, 220 residues long: Mediator of RNA polymerase II transcription subunit 19 (220 aa).

Residues 171 to 220 form a disordered region; the sequence is AFDLDGTGKSQSGSNSGNNSKKRKNKSSGSSMATPTHSDSHEDMKRRRLE. Low complexity predominate over residues 178 to 189; the sequence is GKSQSGSNSGNN. The span at 208-220 shows a compositional bias: basic and acidic residues; it reads SDSHEDMKRRRLE.

Belongs to the Mediator complex subunit 19 family. As to quaternary structure, component of the Mediator complex, which is composed of at least 21 subunits that form three structurally distinct submodules. The Mediator head module contains MED6, MED8, MED11, SRB4/MED17, SRB5/MED18, ROX3/MED19, SRB2/MED20 and SRB6/MED22, the middle module contains MED1, MED4, NUT1/MED5, MED7, CSE2/MED9, NUT2/MED10, SRB7/MED21 and SOH1/MED31, and the tail module contains MED2, PGD1/MED3, RGR1/MED14, GAL11/MED15 and SIN4/MED16. The head and the middle modules interact directly with RNA polymerase II, whereas the elongated tail module interacts with gene-specific regulatory proteins.

The protein localises to the nucleus. In terms of biological role, component of the Mediator complex, a coactivator involved in the regulated transcription of nearly all RNA polymerase II-dependent genes. Mediator functions as a bridge to convey information from gene-specific regulatory proteins to the basal RNA polymerase II transcription machinery. The Mediator complex, having a compact conformation in its free form, is recruited to promoters by direct interactions with regulatory proteins and serves for the assembly of a functional preinitiation complex with RNA polymerase II and the general transcription factors. The Mediator complex unfolds to an extended conformation and partially surrounds RNA polymerase II, specifically interacting with the unphosphorylated form of the C-terminal domain (CTD) of RNA polymerase II. The Mediator complex dissociates from the RNA polymerase II holoenzyme and stays at the promoter when transcriptional elongation begins. This Saccharomyces cerevisiae (strain ATCC 204508 / S288c) (Baker's yeast) protein is Mediator of RNA polymerase II transcription subunit 19 (ROX3).